The primary structure comprises 307 residues: Stage III sporulation protein AA (307 aa).

ATP is bound at residue 143–150; the sequence is GPPQTGKT.

The sequence is that of Stage III sporulation protein AA (spoIIIAA) from Bacillus subtilis (strain 168).